The chain runs to 368 residues: Agmatine deiminase (368 aa).

C357 functions as the Amidino-cysteine intermediate in the catalytic mechanism.

This sequence belongs to the agmatine deiminase family. In terms of assembly, homodimer.

It carries out the reaction agmatine + H2O = N-carbamoylputrescine + NH4(+). It functions in the pathway amine and polyamine biosynthesis; putrescine biosynthesis via agmatine pathway; N-carbamoylputrescine from agmatine: step 1/1. Functionally, mediates the hydrolysis of agmatine into N-carbamoylputrescine in the arginine decarboxylase (ADC) pathway of putrescine biosynthesis, a basic polyamine. The protein is Agmatine deiminase of Pseudomonas fluorescens (strain ATCC BAA-477 / NRRL B-23932 / Pf-5).